The chain runs to 712 residues: Probable serine/threonine-protein kinase fhkE (712 aa).

An FHA domain is found at 46–100 (ITFGRLKDSTVHYNDKSISGSHCKITRESNDDDGVVIAFIYDNSTNGTFIDNIKV). Residues 145-411 (YFIGEMLGQG…CNNIIQHPWF (267 aa)) form the Protein kinase domain. Residues 151–159 (LGQGNFATV) and lysine 174 each bind ATP. Residue aspartate 270 is the Proton acceptor of the active site. Positions 414–442 (NVKLSTLLEEDERLRKKAEAEVEANNNNT) form a coiled coil. Positions 431 to 695 (AEAEVEANNN…KCQYDPNCYR (265 aa)) are disordered. 5 stretches are compositionally biased toward low complexity: residues 436–446 (EANNNNTNKSN), 459–481 (GNCS…IKSN), 514–571 (NNDN…SNDT), 595–605 (NLQNHLNNNKI), and 616–639 (NNNN…NNNN). Positions 669-678 (PQNSSNNNSG) are enriched in polar residues.

The protein belongs to the protein kinase superfamily. CAMK Ser/Thr protein kinase family. CHK2 subfamily.

The enzyme catalyses L-seryl-[protein] + ATP = O-phospho-L-seryl-[protein] + ADP + H(+). It carries out the reaction L-threonyl-[protein] + ATP = O-phospho-L-threonyl-[protein] + ADP + H(+). The sequence is that of Probable serine/threonine-protein kinase fhkE (fhkE) from Dictyostelium discoideum (Social amoeba).